The following is a 65-amino-acid chain: Translational regulator CsrA (65 aa).

This sequence belongs to the CsrA/RsmA family. Homodimer; the beta-strands of each monomer intercalate to form a hydrophobic core, while the alpha-helices form wings that extend away from the core.

The protein resides in the cytoplasm. Its function is as follows. A key translational regulator that binds mRNA to regulate translation initiation and/or mRNA stability. Mediates global changes in gene expression, shifting from rapid growth to stress survival by linking envelope stress, the stringent response and the catabolite repression systems. Usually binds in the 5'-UTR; binding at or near the Shine-Dalgarno sequence prevents ribosome-binding, repressing translation, binding elsewhere in the 5'-UTR can activate translation and/or stabilize the mRNA. Its function is antagonized by small RNA(s). The chain is Translational regulator CsrA from Pseudomonas putida (strain ATCC 47054 / DSM 6125 / CFBP 8728 / NCIMB 11950 / KT2440).